The following is a 407-amino-acid chain: Protein-glutamine gamma-glutamyltransferase (407 aa).

The signal sequence occupies residues 1 to 31 (MRIRRRALVFATMSAVLCTAGFMPSAGEAAA). A propeptide spanning residues 32-76 (DNGAGEETKSYAETYRLTADDVANINALNESAPAASSAGPSFRAP) is cleaved from the precursor. Low complexity predominate over residues 62-72 (SAPAASSAGPS). The disordered stretch occupies residues 62 to 98 (SAPAASSAGPSFRAPDSDDRVTPPAEPLDRMPDPYRP). The span at 76–94 (PDSDDRVTPPAEPLDRMPD) shows a compositional bias: basic and acidic residues. Residue Cys-140 is part of the active site. The disordered stretch occupies residues 282–322 (QDRSSSADKRKYGDPDAFRPAPGTGLVDMSRDRNIPRSPTS). Residues 286–298 (SSADKRKYGDPDA) are compositionally biased toward basic and acidic residues. Active-site residues include Asp-331 and His-350.

This sequence belongs to the bacterial TGase family.

It catalyses the reaction L-glutaminyl-[protein] + L-lysyl-[protein] = [protein]-L-lysyl-N(6)-5-L-glutamyl-[protein] + NH4(+). In terms of biological role, catalyzes the cross-linking of proteins and the conjugation of polyamines to proteins. This is Protein-glutamine gamma-glutamyltransferase from Streptomyces mobaraensis (Streptoverticillium mobaraense).